Consider the following 188-residue polypeptide: Photosystem I assembly protein Ycf4 (188 aa).

Helical transmembrane passes span 26–46 and 70–90; these read YFWA…GLSS and LLFY…SLLW.

Belongs to the Ycf4 family.

The protein resides in the cellular thylakoid membrane. Functionally, seems to be required for the assembly of the photosystem I complex. The sequence is that of Photosystem I assembly protein Ycf4 from Microcystis aeruginosa (strain NIES-843 / IAM M-2473).